The primary structure comprises 380 residues: Cytochrome b (380 aa).

4 helical membrane passes run 34 to 54 (FGSL…LLAM), 78 to 99 (WLIR…YLHI), 114 to 134 (WNTG…GYVL), and 179 to 199 (FFAL…IHLT). 2 residues coordinate heme b: histidine 84 and histidine 98. Positions 183 and 197 each coordinate heme b. Position 202 (histidine 202) interacts with a ubiquinone. Transmembrane regions (helical) follow at residues 227–247 (IKDI…ALFS), 289–309 (LGGV…PFLH), 321–341 (FSQL…WVGS), and 348–368 (FIII…ILFP).

The protein belongs to the cytochrome b family. The cytochrome bc1 complex contains 11 subunits: 3 respiratory subunits (MT-CYB, CYC1 and UQCRFS1), 2 core proteins (UQCRC1 and UQCRC2) and 6 low-molecular weight proteins (UQCRH/QCR6, UQCRB/QCR7, UQCRQ/QCR8, UQCR10/QCR9, UQCR11/QCR10 and a cleavage product of UQCRFS1). This cytochrome bc1 complex then forms a dimer. Heme b is required as a cofactor.

The protein localises to the mitochondrion inner membrane. Component of the ubiquinol-cytochrome c reductase complex (complex III or cytochrome b-c1 complex) that is part of the mitochondrial respiratory chain. The b-c1 complex mediates electron transfer from ubiquinol to cytochrome c. Contributes to the generation of a proton gradient across the mitochondrial membrane that is then used for ATP synthesis. This Numida meleagris (Helmeted guineafowl) protein is Cytochrome b (MT-CYB).